The chain runs to 243 residues: Small ribosomal subunit protein uS3 (243 aa).

N-acetylalanine is present on alanine 2. Position 6 is a phosphoserine; by PKC/PRKCD (serine 6). The KH type-2 domain occupies 21–92; sequence LNEFLTRELA…SVELYAEKVA (72 aa). Residue serine 35 is modified to Phosphoserine. Threonine 42 carries the phosphothreonine; by MAPK modification. Residue lysine 62 is modified to N6-acetyllysine. Asymmetric dimethylarginine; by PRMT1 is present on residues arginine 64, arginine 65, and arginine 67. Residue threonine 70 is modified to Phosphothreonine; by PKB. Lysine 90 participates in a covalent cross-link: Glycyl lysine isopeptide (Lys-Gly) (interchain with G-Cter in ubiquitin). Position 104 is a phosphoserine (serine 104). Lysine 132 is modified (N6-succinyllysine). Lysine 202 is covalently cross-linked (Glycyl lysine isopeptide (Lys-Gly) (interchain with G-Cter in ubiquitin)). Phosphoserine; by IKKB is present on serine 209. Lysine 214 participates in a covalent cross-link: Glycyl lysine isopeptide (Lys-Gly) (interchain with G-Cter in SUMO2); alternate. Lysine 214 is covalently cross-linked (Glycyl lysine isopeptide (Lys-Gly) (interchain with G-Cter in ubiquitin); alternate). Residues 214-243 form a disordered region; the sequence is KDEILPTTPISEQKGGKPEPPAMPQPVPTA. Threonine 220 is subject to Phosphothreonine. Threonine 221 is subject to Phosphothreonine; by CDK1 and PKC/PRKCD. At serine 224 the chain carries Phosphoserine. A Glycyl lysine isopeptide (Lys-Gly) (interchain with G-Cter in SUMO2) cross-link involves residue lysine 230. Positions 231-243 are enriched in pro residues; it reads PEPPAMPQPVPTA. Threonine 242 is subject to Phosphothreonine.

It belongs to the universal ribosomal protein uS3 family. In terms of assembly, component of the 40S small ribosomal subunit. Identified in a IGF2BP1-dependent mRNP granule complex containing untranslated mRNAs. Interacts with HNRPD. Interacts with PRMT1; the interaction methylates RPS3. Interacts with SUMO1; the interaction sumoylates RPS3. Interacts with UBC9. Interacts with CDK1; the interaction phosphorylates RPS3. Interacts with PRKCD; the interaction phosphorylates RPS3. Interacts with PKB/AKT; the interaction phosphorylates RPS3. Interacts with E2F1; the interaction occurs in the absence of nerve growth factor and increases transcription of pro-apoptotic proteins BCL2L11/BIM and HRK/Dp5. Interacts with the base excision repair proteins APEX1 and OGG1; interaction with OGG1 increases OGG1 N-glycosylase activity. Interacts with UNG; the interaction increases the uracil excision activity of UNG1. Interacts with HSP90; the interaction prevents the ubiquitination and proteasome-dependent degradation of RPS3 and is suppressed by increased ROS levels. Interacts with TOM70; the interaction promotes translocation of RPS3 to the mitochondrion. Interacts (via N-terminus) with RELA (via N-terminus); the interaction enhances the DNA-binding activity of the NF-kappa-B p65-p50 complex. Interacts with NFKBIA; the interaction is direct and may bridge the interaction between RPS3 and RELA. Interacts with IKKB; the interaction phosphorylates RPS3 and enhances its translocation to the nucleus. Interacts (via KH domain) with MDM2 and TP53. Interacts with TRADD. Interacts with CRY1. Methylation by PRMT1 is required for import into the nucleolus and for ribosome assembly. Post-translationally, sumoylation by SUMO1 enhances protein stability through increased resistance to proteolysis. Sumoylation occurs at one or more of the three consensus sites, Lys-18, Lys-214 and Lys-230. In terms of processing, phosphorylation at Thr-221 by CDK1 occurs mainly in G2/M phase. Phosphorylation by PRKCD occurs on a non-ribosomal-associated form which results in translocation of RPS3 to the nucleus and enhances its endonuclease activity. Phosphorylated on Ser-209 by IKKB in response to activation of the NF-kappa-B p65-p50 complex which enhances the association of RPS3 with importin-alpha and mediates the nuclear translocation of RPS3. Phosphorylation by MAPK is required for translocation to the nucleus following exposure of cells to DNA damaging agents such as hydrogen peroxide. Phosphorylation by PKB/AKT mediates RPS3 nuclear translocation, enhances RPS3 endonuclease activity and suppresses RPS3-induced neuronal apoptosis. Ubiquitinated; ubiquitination is prevented by interaction with HSP90 which stabilizes the protein. Monoubiquitinated at Lys-214 by RNF10 and ZNF598 when a ribosome has stalled during translation of poly(A) sequences, leading to preclude synthesis of a long poly-lysine tail and initiate the ribosome quality control (RQC) pathway to degrade the potentially detrimental aberrant nascent polypeptide. Deubiquitinated at Lys-214 by USP10, preventing degradation by the proteasome and promoting 40S ribosome subunit recycling following ribosome dissociation. Post-translationally, ufmylated by UFL1.

It localises to the cytoplasm. It is found in the nucleus. Its subcellular location is the nucleolus. The protein localises to the mitochondrion inner membrane. The protein resides in the cytoskeleton. It localises to the spindle. The catalysed reaction is 2'-deoxyribonucleotide-(2'-deoxyribose 5'-phosphate)-2'-deoxyribonucleotide-DNA = a 3'-end 2'-deoxyribonucleotide-(2,3-dehydro-2,3-deoxyribose 5'-phosphate)-DNA + a 5'-end 5'-phospho-2'-deoxyribonucleoside-DNA + H(+). Functionally, component of the small ribosomal subunit. The ribosome is a large ribonucleoprotein complex responsible for the synthesis of proteins in the cell. Has endonuclease activity and plays a role in repair of damaged DNA. Cleaves phosphodiester bonds of DNAs containing altered bases with broad specificity and cleaves supercoiled DNA more efficiently than relaxed DNA. Displays high binding affinity for 7,8-dihydro-8-oxoguanine (8-oxoG), a common DNA lesion caused by reactive oxygen species (ROS). Has also been shown to bind with similar affinity to intact and damaged DNA. Stimulates the N-glycosylase activity of the base excision protein OGG1. Enhances the uracil excision activity of UNG1. Also stimulates the cleavage of the phosphodiester backbone by APEX1. When located in the mitochondrion, reduces cellular ROS levels and mitochondrial DNA damage. Has also been shown to negatively regulate DNA repair in cells exposed to hydrogen peroxide. Plays a role in regulating transcription as part of the NF-kappa-B p65-p50 complex where it binds to the RELA/p65 subunit, enhances binding of the complex to DNA and promotes transcription of target genes. Represses its own translation by binding to its cognate mRNA. Binds to and protects TP53/p53 from MDM2-mediated ubiquitination. Involved in spindle formation and chromosome movement during mitosis by regulating microtubule polymerization. Involved in induction of apoptosis through its role in activation of CASP8. Induces neuronal apoptosis by interacting with the E2F1 transcription factor and acting synergistically with it to up-regulate pro-apoptotic proteins BCL2L11/BIM and HRK/Dp5. Interacts with TRADD following exposure to UV radiation and induces apoptosis by caspase-dependent JNK activation. In Bos taurus (Bovine), this protein is Small ribosomal subunit protein uS3 (RPS3).